Reading from the N-terminus, the 275-residue chain is Aldo-keto reductase MSMEG_2408/MSMEI_2347 (275 aa).

Tyr-49 serves as the catalytic Proton donor. Leu-189, Ile-227, Lys-229, Ser-230, Val-231, Arg-235, Ser-238, and Asn-239 together coordinate NADPH. Lys-262 participates in a covalent cross-link: Isoglutamyl lysine isopeptide (Lys-Gln) (interchain with Q-Cter in protein Pup).

This sequence belongs to the aldo/keto reductase family.

The protein is Aldo-keto reductase MSMEG_2408/MSMEI_2347 of Mycolicibacterium smegmatis (strain ATCC 700084 / mc(2)155) (Mycobacterium smegmatis).